The following is a 215-amino-acid chain: Cytidylate kinase (215 aa).

Residue glycine 10–threonine 18 coordinates ATP.

The protein belongs to the cytidylate kinase family. Type 1 subfamily.

It is found in the cytoplasm. It carries out the reaction CMP + ATP = CDP + ADP. The enzyme catalyses dCMP + ATP = dCDP + ADP. This Bartonella bacilliformis (strain ATCC 35685 / KC583 / Herrer 020/F12,63) protein is Cytidylate kinase.